The chain runs to 342 residues: MMEMITIKPGKITVQANPNMPKEVAELFRKQHYEIVGRHSGVKLCHWLKKSLTEGRFCYKQKFYGIHSHRCLQMTPVLAWCTHNCIFCWRPMENFLGTELPQPWDDPAFIVEESIKAQRKLLIGYKGNPKVDKKKFEEAWNPTHAAISLSGEPMLYPYMGDLVEEFHKRGFTTFIVTNGTIPERLEEMIKEDKLPTQLYVSITAPDIETYNSVNIPMIPDGWERILRFLELMRDLPTRTVVRLTLVKGENMHSPEKYAKLILKARPMFVEAKAYMFVGYSRNRLTINNMPSHQDIREFAEALVKHLPGYHIEDEYEPSRVVLIMRDDVDPQGTGVEGRFIKH.

3 residues coordinate [2Fe-2S] cluster: cysteine 45, cysteine 58, and cysteine 71. A Radical SAM core domain is found at 64–312; sequence YGIHSHRCLQ…VKHLPGYHIE (249 aa). 3 residues coordinate [4Fe-4S] cluster: cysteine 81, cysteine 85, and cysteine 88.

Belongs to the TYW1 family. As to quaternary structure, monomer. Requires [2Fe-2S] cluster as cofactor. [4Fe-4S] cluster serves as cofactor.

Its subcellular location is the cytoplasm. The catalysed reaction is N(1)-methylguanosine(37) in tRNA(Phe) + pyruvate + S-adenosyl-L-methionine = 4-demethylwyosine(37) in tRNA(Phe) + 5'-deoxyadenosine + L-methionine + CO2 + H2O. Functionally, component of the wyosine derivatives biosynthesis pathway that catalyzes the condensation of N-methylguanine with 2 carbon atoms from pyruvate to form the tricyclic 4-demethylwyosine (imG-14) on guanosine-37 of tRNA(Phe). This chain is S-adenosyl-L-methionine-dependent tRNA 4-demethylwyosine synthase, found in Pyrococcus horikoshii (strain ATCC 700860 / DSM 12428 / JCM 9974 / NBRC 100139 / OT-3).